A 310-amino-acid polypeptide reads, in one-letter code: Aspartate carbamoyltransferase catalytic subunit (310 aa).

Carbamoyl phosphate is bound by residues Arg-55 and Thr-56. Lys-85 contributes to the L-aspartate binding site. Carbamoyl phosphate-binding residues include Arg-106, His-135, and Gln-138. L-aspartate contacts are provided by Arg-168 and Arg-230. Leu-268 and Pro-269 together coordinate carbamoyl phosphate.

It belongs to the aspartate/ornithine carbamoyltransferase superfamily. ATCase family. In terms of assembly, heterododecamer (2C3:3R2) of six catalytic PyrB chains organized as two trimers (C3), and six regulatory PyrI chains organized as three dimers (R2).

The enzyme catalyses carbamoyl phosphate + L-aspartate = N-carbamoyl-L-aspartate + phosphate + H(+). It functions in the pathway pyrimidine metabolism; UMP biosynthesis via de novo pathway; (S)-dihydroorotate from bicarbonate: step 2/3. Catalyzes the condensation of carbamoyl phosphate and aspartate to form carbamoyl aspartate and inorganic phosphate, the committed step in the de novo pyrimidine nucleotide biosynthesis pathway. In Buchnera aphidicola subsp. Acyrthosiphon pisum (strain APS) (Acyrthosiphon pisum symbiotic bacterium), this protein is Aspartate carbamoyltransferase catalytic subunit.